The primary structure comprises 425 residues: Serine--tRNA ligase (425 aa).

231 to 233 (TAE) lines the L-serine pocket. 262-264 (RSE) is a binding site for ATP. Glutamate 285 is an L-serine binding site. 349–352 (EISS) is a binding site for ATP. Serine 385 lines the L-serine pocket.

It belongs to the class-II aminoacyl-tRNA synthetase family. Type-1 seryl-tRNA synthetase subfamily. In terms of assembly, homodimer. The tRNA molecule binds across the dimer.

The protein localises to the cytoplasm. It catalyses the reaction tRNA(Ser) + L-serine + ATP = L-seryl-tRNA(Ser) + AMP + diphosphate + H(+). It carries out the reaction tRNA(Sec) + L-serine + ATP = L-seryl-tRNA(Sec) + AMP + diphosphate + H(+). Its pathway is aminoacyl-tRNA biosynthesis; selenocysteinyl-tRNA(Sec) biosynthesis; L-seryl-tRNA(Sec) from L-serine and tRNA(Sec): step 1/1. Its function is as follows. Catalyzes the attachment of serine to tRNA(Ser). Is also able to aminoacylate tRNA(Sec) with serine, to form the misacylated tRNA L-seryl-tRNA(Sec), which will be further converted into selenocysteinyl-tRNA(Sec). In Alkaliphilus oremlandii (strain OhILAs) (Clostridium oremlandii (strain OhILAs)), this protein is Serine--tRNA ligase.